We begin with the raw amino-acid sequence, 62 residues long: Large ribosomal subunit protein eL24 (62 aa).

Positions 6, 9, 32, and 36 each coordinate Zn(2+). The segment at 6-36 (CYFCGKMLEPGTGKLYVKKDGSTYFMCSSKC) adopts a C4-type zinc-finger fold.

This sequence belongs to the eukaryotic ribosomal protein eL24 family. Part of the 50S ribosomal subunit. Forms a cluster with proteins L3 and L14. The cofactor is Zn(2+).

Its function is as follows. Binds to the 23S rRNA. This is Large ribosomal subunit protein eL24 from Methanosarcina acetivorans (strain ATCC 35395 / DSM 2834 / JCM 12185 / C2A).